The chain runs to 646 residues: Beta-mannosyltransferase 6 (646 aa).

Topologically, residues 1-25 (MGNYKPSIKQYVVTVKAIKSSQFGR) are cytoplasmic. Residues 26-46 (LGICAVVLLFVLGYPFYFISN) traverse the membrane as a helical segment. Residues 47–646 (NPFDTSIRYQ…LTGGWLPSHN (600 aa)) lie on the Extracellular side of the membrane. N-linked (GlcNAc...) asparagine glycans are attached at residues Asn62, Asn81, Asn103, Asn117, Asn127, Asn132, Asn146, Asn334, and Asn393.

The protein belongs to the BMT family.

It is found in the membrane. Its function is as follows. Beta-mannosyltransferase involved in cell wall biosynthesis. Required for beta-1,2-mannose transfer on phospholipomannan. Required for pro-inflammatory response in macrophages through phospholipomannan-induced TNF-alpha production. The polypeptide is Beta-mannosyltransferase 6 (BMT6) (Candida albicans (strain SC5314 / ATCC MYA-2876) (Yeast)).